The following is a 308-amino-acid chain: Homoserine kinase (308 aa).

95 to 105 (PQSRGLGSSAA) is an ATP binding site.

This sequence belongs to the GHMP kinase family. Homoserine kinase subfamily.

The protein resides in the cytoplasm. The catalysed reaction is L-homoserine + ATP = O-phospho-L-homoserine + ADP + H(+). The protein operates within amino-acid biosynthesis; L-threonine biosynthesis; L-threonine from L-aspartate: step 4/5. Functionally, catalyzes the ATP-dependent phosphorylation of L-homoserine to L-homoserine phosphate. The chain is Homoserine kinase from Corynebacterium jeikeium (strain K411).